A 494-amino-acid polypeptide reads, in one-letter code: MKYHDLRDFISLLEQRGELKRIKQEIDPDLEMTEIADRTLRAGGPALLFENPKGYSMPVLCNLFGTPDRVALGMGQEDVKALRDVGKLLAFLKEPEPPRGFRDFFDKMPQWKQVLNMPTKRLRNAPCQQQIWQGDDVDLTRIPVMKCWPGDAAPLVTWGLTVTRGPSKERQNLGIYRQQVIGKNKLIMRWLSHRGGALDFQEWCQQHPGERFPVSVALGADPATILGAVTPVPDTLSEYAFAGLLRGTKTEVVKCVSNDLEVPASAEIVLEGYIEPGEVAPEGPYGDHTGYYNEVDDFPVFTVTHITQRRDAIYHSTYTGRPPDEPAVLGVALNEVFVPILQKQFPEIVDFYLPPEGCSYRLAVVTIKKQYAGHAKRVMMGVWSFLRQFMYTKFVIVCDDDVNARDWNDVIWAITTRMDPARDTVLVENTPIDYLDFASPVSGLGSKMGMDATNKWPGETQREWGTPIRKDPAVVARIDAIWDELGILSDTPAR.

N172 is a binding site for Mn(2+). Residues 175–177 (IYR), 189–191 (RWL), and 194–195 (RG) each bind prenylated FMN. E238 lines the Mn(2+) pocket. D287 acts as the Proton donor in catalysis.

This sequence belongs to the UbiD family. Homohexamer. The cofactor is prenylated FMN. Requires Mn(2+) as cofactor.

The protein resides in the cell membrane. It carries out the reaction a 4-hydroxy-3-(all-trans-polyprenyl)benzoate + H(+) = a 2-(all-trans-polyprenyl)phenol + CO2. It participates in cofactor biosynthesis; ubiquinone biosynthesis. Functionally, catalyzes the decarboxylation of 3-octaprenyl-4-hydroxy benzoate to 2-octaprenylphenol, an intermediate step in ubiquinone biosynthesis. The sequence is that of 3-octaprenyl-4-hydroxybenzoate carboxy-lyase from Erwinia tasmaniensis (strain DSM 17950 / CFBP 7177 / CIP 109463 / NCPPB 4357 / Et1/99).